A 623-amino-acid chain; its full sequence is NADPH-dependent diflavin oxidoreductase 1 (623 aa).

The region spanning 7–168 is the Flavodoxin-like domain; sequence IVILYGSETG…VYFEYEKKVL (162 aa). FMN is bound by residues 13 to 18, 60 to 63, 106 to 115, and D142; these read SETGNA, STTG, and LGDSSYPKFN. Residues 224–491 form the FAD-binding FR-type domain; sequence ESLKVGRVNI…VGPGVGLAPL (268 aa). Residues R383, 413–416, and 445–448 each bind FAD; these read RYYS and GICT. An NADP(+)-binding site is contributed by 538–539; it reads SR. W623 is a binding site for FAD.

The protein belongs to the NADPH-dependent diflavin oxidoreductase NDOR1 family. In the N-terminal section; belongs to the flavodoxin family. This sequence in the C-terminal section; belongs to the flavoprotein pyridine nucleotide cytochrome reductase family. As to quaternary structure, interacts with DRE2; as part of the cytosolic iron-sulfur (Fe-S) protein assembly (CIA) machinery. FAD serves as cofactor. FMN is required as a cofactor.

The protein resides in the cytoplasm. It localises to the mitochondrion. The catalysed reaction is 2 oxidized [2Fe-2S]-[protein] + NADPH = 2 reduced [2Fe-2S]-[protein] + NADP(+) + H(+). NADPH-dependent reductase which is a central component of the cytosolic iron-sulfur (Fe-S) protein assembly (CIA) machinery. Transfers electrons from NADPH via its FAD and FMN prosthetic groups to the [2Fe-2S] cluster of DRE2, another key component of the CIA machinery. In turn, this reduced cluster provides electrons for assembly of cytosolic iron-sulfur cluster proteins. Positively controls H(2)O(2)-induced cell death. The sequence is that of NADPH-dependent diflavin oxidoreductase 1 from Saccharomyces cerevisiae (strain ATCC 204508 / S288c) (Baker's yeast).